We begin with the raw amino-acid sequence, 339 residues long: Glycerol-3-phosphate dehydrogenase [NAD(P)+] (339 aa).

Ser15, Tyr16, His36, and Lys110 together coordinate NADPH. Sn-glycerol 3-phosphate contacts are provided by Lys110, Gly139, and Thr141. Residue Ala143 participates in NADPH binding. Sn-glycerol 3-phosphate is bound by residues Lys195, Asp248, Ser258, Arg259, and Asn260. The Proton acceptor role is filled by Lys195. Residue Arg259 participates in NADPH binding. Residues Val283 and Glu285 each contribute to the NADPH site.

Belongs to the NAD-dependent glycerol-3-phosphate dehydrogenase family.

The protein resides in the cytoplasm. It carries out the reaction sn-glycerol 3-phosphate + NAD(+) = dihydroxyacetone phosphate + NADH + H(+). The enzyme catalyses sn-glycerol 3-phosphate + NADP(+) = dihydroxyacetone phosphate + NADPH + H(+). Its pathway is membrane lipid metabolism; glycerophospholipid metabolism. Catalyzes the reduction of the glycolytic intermediate dihydroxyacetone phosphate (DHAP) to sn-glycerol 3-phosphate (G3P), the key precursor for phospholipid synthesis. The sequence is that of Glycerol-3-phosphate dehydrogenase [NAD(P)+] from Cronobacter sakazakii (strain ATCC BAA-894) (Enterobacter sakazakii).